Here is a 216-residue protein sequence, read N- to C-terminus: Large ribosomal subunit protein uL1 (216 aa).

It belongs to the universal ribosomal protein uL1 family. Component of the large ribosomal subunit.

The protein localises to the cytoplasm. Component of the large ribosomal subunit. The ribosome is a large ribonucleoprotein complex responsible for the synthesis of proteins in the cell. The polypeptide is Large ribosomal subunit protein uL1 (rpl10a) (Danio rerio (Zebrafish)).